Consider the following 81-residue polypeptide: MNDAFSTAQHRLDALGLRCPEPVMMVRKTVRQMAAGETLLIIADDPATTRDIPSFCEFMDHTLIASETTQTPYHYLIKKGL.

Cys-19 acts as the Cysteine persulfide intermediate in catalysis.

Belongs to the sulfur carrier protein TusA family.

The protein resides in the cytoplasm. Functionally, sulfur carrier protein which probably makes part of a sulfur-relay system. This chain is Sulfur carrier protein TusA, found in Shewanella baltica (strain OS185).